The primary structure comprises 311 residues: DNA repair and recombination protein RadA (311 aa).

Position 104–111 (104–111) interacts with ATP; sequence GEFGSGKS.

The protein belongs to the eukaryotic RecA-like protein family.

Functionally, involved in DNA repair and in homologous recombination. Binds and assemble on single-stranded DNA to form a nucleoprotein filament. Hydrolyzes ATP in a ssDNA-dependent manner and promotes DNA strand exchange between homologous DNA molecules. The sequence is that of DNA repair and recombination protein RadA from Methanobrevibacter smithii (strain ATCC 35061 / DSM 861 / OCM 144 / PS).